The chain runs to 248 residues: Adenosylcobinamide-GDP ribazoletransferase (248 aa).

6 helical membrane-spanning segments follow: residues 34–54 (LVFAPVVGLLIGGILTILFYI), 58–78 (FFPPGVTGILLIAAYIMLTGG), 113–133 (AVLAVICVVILNYALLSSIPL), 139–159 (ALLLFPVAGRIGSLVGAGSTV), 185–205 (IIYFIVSLLVLNIKGLLLAAA), and 227–247 (DILGAVCELNQTFFLILFYLF).

Belongs to the CobS family. Requires Mg(2+) as cofactor.

The protein resides in the cell membrane. It carries out the reaction alpha-ribazole + adenosylcob(III)inamide-GDP = adenosylcob(III)alamin + GMP + H(+). It catalyses the reaction alpha-ribazole 5'-phosphate + adenosylcob(III)inamide-GDP = adenosylcob(III)alamin 5'-phosphate + GMP + H(+). It participates in cofactor biosynthesis; adenosylcobalamin biosynthesis; adenosylcobalamin from cob(II)yrinate a,c-diamide: step 7/7. Its function is as follows. Joins adenosylcobinamide-GDP and alpha-ribazole to generate adenosylcobalamin (Ado-cobalamin). Also synthesizes adenosylcobalamin 5'-phosphate from adenosylcobinamide-GDP and alpha-ribazole 5'-phosphate. This chain is Adenosylcobinamide-GDP ribazoletransferase, found in Acetivibrio thermocellus (strain ATCC 27405 / DSM 1237 / JCM 9322 / NBRC 103400 / NCIMB 10682 / NRRL B-4536 / VPI 7372) (Clostridium thermocellum).